Reading from the N-terminus, the 106-residue chain is Small ribosomal subunit protein uS10 (106 aa).

Belongs to the universal ribosomal protein uS10 family. In terms of assembly, part of the 30S ribosomal subunit.

Involved in the binding of tRNA to the ribosomes. The protein is Small ribosomal subunit protein uS10 of Hyphomonas neptunium (strain ATCC 15444).